A 152-amino-acid chain; its full sequence is Arginine repressor (152 aa).

Belongs to the ArgR family.

Its subcellular location is the cytoplasm. It functions in the pathway amino-acid biosynthesis; L-arginine biosynthesis [regulation]. Its function is as follows. Regulates arginine biosynthesis genes. In Lactococcus lactis subsp. lactis (strain IL1403) (Streptococcus lactis), this protein is Arginine repressor.